Here is a 539-residue protein sequence, read N- to C-terminus: Protein pim1 (539 aa).

The tract at residues 1–53 (MTSNRSTRSSTKREEVSKNGVEKRELDESDVMKNGKKPVKRAKVSSLPKPVRV) is disordered. Residues 11 to 33 (TKREEVSKNGVEKRELDESDVMK) show a composition bias toward basic and acidic residues. A compositionally biased stretch (basic residues) spans 34–43 (NGKKPVKRAK). RCC1 repeat units follow at residues 70–125 (RLNV…ALSH), 127–191 (GRVY…AITD), 192–243 (NGCC…ALTT), 244–296 (TGKV…AIDN), 298–353 (GRVY…ALLE), 354–417 (DGRV…AVTS), and 419–472 (GKVY…IAGI). The segment at 478-539 (EPVANGIKSE…SVLEPSSTTA (62 aa)) is disordered. Residues 486–504 (SEPENEKKLKTEETSKTDD) are compositionally biased toward basic and acidic residues. Over residues 514 to 525 (VTSNGEPSTATS) the composition is skewed to polar residues.

In terms of assembly, oligomer of dis3, pim1 and spi1. Interacts with ned1.

It localises to the nucleus. Functionally, promotes the exchange of Ran(spi1)-bound GDP by GTP. Involved in the control of mitosis. Regulates a variety of nuclear events, including mitotic check-point, chromosome decondensation and mRNA processing/transport. The sequence is that of Protein pim1 (pim1) from Schizosaccharomyces pombe (strain 972 / ATCC 24843) (Fission yeast).